Consider the following 234-residue polypeptide: LexA repressor (234 aa).

Positions 26–46 form a DNA-binding region, H-T-H motif; the sequence is FDEMKTALELTSKSGIHRLIT. Catalysis depends on for autocatalytic cleavage activity residues Ser155 and Lys193.

Belongs to the peptidase S24 family. As to quaternary structure, homodimer.

The catalysed reaction is Hydrolysis of Ala-|-Gly bond in repressor LexA.. Functionally, represses a number of genes involved in the response to DNA damage (SOS response), including recA and lexA. In the presence of single-stranded DNA, RecA interacts with LexA causing an autocatalytic cleavage which disrupts the DNA-binding part of LexA, leading to derepression of the SOS regulon and eventually DNA repair. This Bartonella henselae (strain ATCC 49882 / DSM 28221 / CCUG 30454 / Houston 1) (Rochalimaea henselae) protein is LexA repressor.